A 203-amino-acid polypeptide reads, in one-letter code: Translation initiation factor IF-3 (203 aa).

Over residues 172 to 182 the composition is skewed to basic and acidic residues; sequence EAPKNEKKTKE. Positions 172–203 are disordered; it reads EAPKNEKKTKENNPPFNRINLMKGENHAKNED.

Belongs to the IF-3 family. As to quaternary structure, monomer.

The protein resides in the cytoplasm. In terms of biological role, IF-3 binds to the 30S ribosomal subunit and shifts the equilibrium between 70S ribosomes and their 50S and 30S subunits in favor of the free subunits, thus enhancing the availability of 30S subunits on which protein synthesis initiation begins. This chain is Translation initiation factor IF-3, found in Helicobacter pylori (strain ATCC 700392 / 26695) (Campylobacter pylori).